The primary structure comprises 478 residues: ATP synthase subunit beta (478 aa).

Residue 164–171 participates in ATP binding; that stretch reads GGAGVGKT.

The protein belongs to the ATPase alpha/beta chains family. F-type ATPases have 2 components, CF(1) - the catalytic core - and CF(0) - the membrane proton channel. CF(1) has five subunits: alpha(3), beta(3), gamma(1), delta(1), epsilon(1). CF(0) has three main subunits: a(1), b(2) and c(9-12). The alpha and beta chains form an alternating ring which encloses part of the gamma chain. CF(1) is attached to CF(0) by a central stalk formed by the gamma and epsilon chains, while a peripheral stalk is formed by the delta and b chains.

Its subcellular location is the cell membrane. It catalyses the reaction ATP + H2O + 4 H(+)(in) = ADP + phosphate + 5 H(+)(out). Functionally, produces ATP from ADP in the presence of a proton gradient across the membrane. The catalytic sites are hosted primarily by the beta subunits. The polypeptide is ATP synthase subunit beta (Streptomyces coelicolor (strain ATCC BAA-471 / A3(2) / M145)).